Consider the following 175-residue polypeptide: Cytochrome c homolog (175 aa).

Residues 1–8 (MSGKELNK) are Cytoplasmic-facing. The helical; Signal-anchor transmembrane segment at 9–29 (IVAAILFASLIAMMVGFVANI) threads the bilayer. Residues 30-175 (LYKPTLELQH…LFLKTYVHDK (146 aa)) lie on the Periplasmic side of the membrane. 4 residues coordinate heme c: Cys-84, Cys-87, His-88, and Met-150.

The protein belongs to the cytochrome c family. Post-translationally, binds 1 heme c group covalently per subunit.

The protein localises to the cell membrane. May be involved in electron transfer from bc1 complex to aa3. The polypeptide is Cytochrome c homolog (cycM) (Rickettsia felis (strain ATCC VR-1525 / URRWXCal2) (Rickettsia azadi)).